Here is a 591-residue protein sequence, read N- to C-terminus: Max-binding protein MNT (591 aa).

Position 2 is an N-acetylserine (Ser-2). 2 disordered regions span residues 17 to 122 (AQQQ…APRQ) and 182 to 223 (PGVQ…GIGT). Positions 22–44 (RAREEQERLRLEREREREQEQKR) are enriched in basic and acidic residues. Composition is skewed to pro residues over residues 63–84 (EAPP…PLAT) and 102–120 (SLPP…PLAP). Positions 205 to 216 (PAEEAKSSEQKK) are enriched in basic and acidic residues. The bHLH domain occupies 222-273 (GTREVHNKLEKNRRAHLKECFETLKRNIPNVDDKKTSNLSVLRTALRYIQSL). Positions 273 to 301 (LKRKEKEYEHEMERLAREKIATQQRLAEL) are leucine-zipper. Residues 321–426 (TGQPEDDQAS…PPPATPTQTL (106 aa)) are disordered. The segment covering 336–346 (EGEDNVDEEME) has biased composition (acidic residues). A compositionally biased stretch (pro residues) spans 374–383 (STAPAPLPTH). Residues 390 to 411 (PVALSPAHLPVQQQQPPQQKTP) are compositionally biased toward low complexity. Positions 412 to 421 (LPAPPPPPAT) are enriched in pro residues.

In terms of assembly, efficient DNA binding requires dimerization with another bHLH protein. Binds DNA as a homodimer or a heterodimer with MAX.

The protein resides in the nucleus. In terms of biological role, binds DNA as a heterodimer with MAX and represses transcription. Binds to the canonical E box sequence 5'-CACGTG-3' and, with higher affinity, to 5'-CACGCG-3'. The polypeptide is Max-binding protein MNT (Mnt) (Mus musculus (Mouse)).